We begin with the raw amino-acid sequence, 239 residues long: Enolase-phosphatase E1 (239 aa).

It belongs to the HAD-like hydrolase superfamily. MasA/MtnC family. In terms of assembly, monomer. The cofactor is Mg(2+).

The enzyme catalyses 5-methylsulfanyl-2,3-dioxopentyl phosphate + H2O = 1,2-dihydroxy-5-(methylsulfanyl)pent-1-en-3-one + phosphate. Its pathway is amino-acid biosynthesis; L-methionine biosynthesis via salvage pathway; L-methionine from S-methyl-5-thio-alpha-D-ribose 1-phosphate: step 3/6. It functions in the pathway amino-acid biosynthesis; L-methionine biosynthesis via salvage pathway; L-methionine from S-methyl-5-thio-alpha-D-ribose 1-phosphate: step 4/6. Bifunctional enzyme that catalyzes the enolization of 2,3-diketo-5-methylthiopentyl-1-phosphate (DK-MTP-1-P) into the intermediate 2-hydroxy-3-keto-5-methylthiopentenyl-1-phosphate (HK-MTPenyl-1-P), which is then dephosphorylated to form the acireductone 1,2-dihydroxy-3-keto-5-methylthiopentene (DHK-MTPene). This Streptomyces avermitilis (strain ATCC 31267 / DSM 46492 / JCM 5070 / NBRC 14893 / NCIMB 12804 / NRRL 8165 / MA-4680) protein is Enolase-phosphatase E1.